The sequence spans 333 residues: Biotin synthase (333 aa).

The 230-residue stretch at 47-276 (FFKNQMEFCS…KSEIRLCGGR (230 aa)) folds into the Radical SAM core domain. [4Fe-4S] cluster-binding residues include cysteine 65, cysteine 69, and cysteine 72. [2Fe-2S] cluster contacts are provided by cysteine 109, cysteine 141, cysteine 201, and arginine 271.

The protein belongs to the radical SAM superfamily. Biotin synthase family. As to quaternary structure, homodimer. Requires [4Fe-4S] cluster as cofactor. It depends on [2Fe-2S] cluster as a cofactor.

It catalyses the reaction (4R,5S)-dethiobiotin + (sulfur carrier)-SH + 2 reduced [2Fe-2S]-[ferredoxin] + 2 S-adenosyl-L-methionine = (sulfur carrier)-H + biotin + 2 5'-deoxyadenosine + 2 L-methionine + 2 oxidized [2Fe-2S]-[ferredoxin]. It functions in the pathway cofactor biosynthesis; biotin biosynthesis; biotin from 7,8-diaminononanoate: step 2/2. In terms of biological role, catalyzes the conversion of dethiobiotin (DTB) to biotin by the insertion of a sulfur atom into dethiobiotin via a radical-based mechanism. This Sulfurihydrogenibium sp. (strain YO3AOP1) protein is Biotin synthase.